A 246-amino-acid chain; its full sequence is MACLWSFSWPSCFLSLLLLLLQLSCSYAGQFRVIGPGYPIRALVGDEAELPCRISPGKNATGMEVGWYRSPFSRVVHLYRNGKDQDAEQAPEYRGRTELLKETISEGKVTLRIQNVRFSDEGGYTCFFRDHSYQEEAAMELKVEDPFYWVNPGVLTLIALVPTILLQVPVGLVFLFLQHRLRGKLRAEVENLHRTFDPHFLRVPCWKITLFVIVPVLGPLVALIICYNWLHRRLAGQFLEELRNPF.

Positions 1-28 are cleaved as a signal peptide; that stretch reads MACLWSFSWPSCFLSLLLLLLQLSCSYA. The Extracellular portion of the chain corresponds to 29-156; the sequence is GQFRVIGPGY…FYWVNPGVLT (128 aa). The Ig-like V-type domain maps to 31 to 144; it reads FRVIGPGYPI…EEAAMELKVE (114 aa). A disulfide bond links C52 and C126. N-linked (GlcNAc...) asparagine glycosylation occurs at N59. The helical transmembrane segment at 157 to 177 threads the bilayer; the sequence is LIALVPTILLQVPVGLVFLFL. Residues 178-209 lie on the Cytoplasmic side of the membrane; that stretch reads QHRLRGKLRAEVENLHRTFDPHFLRVPCWKIT. The helical transmembrane segment at 210 to 230 threads the bilayer; sequence LFVIVPVLGPLVALIICYNWL. The Extracellular segment spans residues 231 to 246; the sequence is HRRLAGQFLEELRNPF.

Belongs to the immunoglobulin superfamily. BTN/MOG family. Homodimer. As to expression, found exclusively in the CNS, where it is localized on the surface of myelin and oligodendrocyte cytoplasmic membranes. Reduced expression levels are observed in jimpy and quacking dysmyelinating mutant mice.

It is found in the membrane. Its function is as follows. Minor component of the myelin sheath. May be involved in completion and/or maintenance of the myelin sheath and in cell-cell communication. Mediates homophilic cell-cell adhesion. This is Myelin-oligodendrocyte glycoprotein (Mog) from Mus musculus (Mouse).